The primary structure comprises 278 residues: 4-diphosphocytidyl-2-C-methyl-D-erythritol kinase (278 aa).

The active site involves K9. 93-103 provides a ligand contact to ATP; sequence PISAGLAGGSS. D135 is a catalytic residue.

The protein belongs to the GHMP kinase family. IspE subfamily.

It catalyses the reaction 4-CDP-2-C-methyl-D-erythritol + ATP = 4-CDP-2-C-methyl-D-erythritol 2-phosphate + ADP + H(+). It functions in the pathway isoprenoid biosynthesis; isopentenyl diphosphate biosynthesis via DXP pathway; isopentenyl diphosphate from 1-deoxy-D-xylulose 5-phosphate: step 3/6. In terms of biological role, catalyzes the phosphorylation of the position 2 hydroxy group of 4-diphosphocytidyl-2C-methyl-D-erythritol. The sequence is that of 4-diphosphocytidyl-2-C-methyl-D-erythritol kinase from Finegoldia magna (strain ATCC 29328 / DSM 20472 / WAL 2508) (Peptostreptococcus magnus).